A 304-amino-acid chain; its full sequence is Carbonic anhydrase 5A, mitochondrial (304 aa).

A mitochondrion-targeting transit peptide spans methionine 1–phenylalanine 34. Positions glutamine 35–phenylalanine 295 constitute an Alpha-carbonic anhydrase domain. Zn(2+) contacts are provided by histidine 129, histidine 131, and histidine 154.

It belongs to the alpha-carbonic anhydrase family. The cofactor is Zn(2+). As to expression, high in liver, also detected in heart, lung, kidney, spleen and intestine.

It localises to the mitochondrion. It catalyses the reaction hydrogencarbonate + H(+) = CO2 + H2O. Functionally, mitochondrial carbonic anhydrase that catalyzes the reversible conversion of carbon dioxide to bicarbonate/HCO3. Mitochondria are impermeable to HCO3, and thus this intramitochondrial carbonic anhydrase is pivotal in providing HCO3 for multiple mitochondrial enzymes that catalyze the formation of essential metabolites of intermediary metabolism in the urea and Krebs cycles. The polypeptide is Carbonic anhydrase 5A, mitochondrial (Rattus norvegicus (Rat)).